A 123-amino-acid chain; its full sequence is Small ribosomal subunit protein uS12 (123 aa).

The interval 1–31 is disordered; it reads MPTIQQLVRKGRHSKKAKVATAGLKGSPQRR. Basic residues predominate over residues 9 to 18; that stretch reads RKGRHSKKAK. D89 is modified (3-methylthioaspartic acid).

Belongs to the universal ribosomal protein uS12 family. In terms of assembly, part of the 30S ribosomal subunit. Contacts proteins S8 and S17. May interact with IF1 in the 30S initiation complex.

With S4 and S5 plays an important role in translational accuracy. Functionally, interacts with and stabilizes bases of the 16S rRNA that are involved in tRNA selection in the A site and with the mRNA backbone. Located at the interface of the 30S and 50S subunits, it traverses the body of the 30S subunit contacting proteins on the other side and probably holding the rRNA structure together. The combined cluster of proteins S8, S12 and S17 appears to hold together the shoulder and platform of the 30S subunit. This chain is Small ribosomal subunit protein uS12, found in Corynebacterium aurimucosum (strain ATCC 700975 / DSM 44827 / CIP 107346 / CN-1) (Corynebacterium nigricans).